Consider the following 130-residue polypeptide: Small ribosomal subunit protein uS11 (130 aa).

This sequence belongs to the universal ribosomal protein uS11 family. In terms of assembly, part of the 30S ribosomal subunit. Interacts with proteins S7 and S18. Binds to IF-3.

Located on the platform of the 30S subunit, it bridges several disparate RNA helices of the 16S rRNA. Forms part of the Shine-Dalgarno cleft in the 70S ribosome. In Shewanella denitrificans (strain OS217 / ATCC BAA-1090 / DSM 15013), this protein is Small ribosomal subunit protein uS11.